Here is a 286-residue protein sequence, read N- to C-terminus: Ribonuclease Z (286 aa).

Zn(2+)-binding residues include H61, H63, D65, H66, H153, D176, and H240. The active-site Proton acceptor is the D65.

The protein belongs to the RNase Z family. Homodimer. Requires Zn(2+) as cofactor.

The catalysed reaction is Endonucleolytic cleavage of RNA, removing extra 3' nucleotides from tRNA precursor, generating 3' termini of tRNAs. A 3'-hydroxy group is left at the tRNA terminus and a 5'-phosphoryl group is left at the trailer molecule.. In terms of biological role, zinc phosphodiesterase, which displays some tRNA 3'-processing endonuclease activity. Probably involved in tRNA maturation, by removing a 3'-trailer from precursor tRNA. The sequence is that of Ribonuclease Z from Mycolicibacterium gilvum (strain PYR-GCK) (Mycobacterium gilvum (strain PYR-GCK)).